Reading from the N-terminus, the 219-residue chain is Chloramphenicol acetyltransferase (219 aa).

The Proton acceptor role is filled by histidine 190.

Belongs to the chloramphenicol acetyltransferase family. As to quaternary structure, homotrimer.

It carries out the reaction chloramphenicol + acetyl-CoA = chloramphenicol 3-acetate + CoA. Functionally, this enzyme is an effector of chloramphenicol resistance in bacteria. The chain is Chloramphenicol acetyltransferase (catQ) from Clostridium perfringens.